Reading from the N-terminus, the 514-residue chain is Double-stranded RNA-binding protein 6 (514 aa).

2 DRBM domains span residues 1-70 (MYKN…ALAR) and 87-155 (VYKN…SLRQ). Disordered stretches follow at residues 195–268 (NNPH…SRFP) and 455–496 (EASQ…KDDH). Composition is skewed to polar residues over residues 216–225 (FPQSSHSSYS), 249–263 (AASQ…SPNP), and 473–484 (SPDSLPKTQLKT).

Functionally, binds double-stranded RNA. This is Double-stranded RNA-binding protein 6 (DRB6) from Oryza sativa subsp. japonica (Rice).